Reading from the N-terminus, the 282-residue chain is ATP synthase gamma chain (282 aa).

It belongs to the ATPase gamma chain family. As to quaternary structure, F-type ATPases have 2 components, CF(1) - the catalytic core - and CF(0) - the membrane proton channel. CF(1) has five subunits: alpha(3), beta(3), gamma(1), delta(1), epsilon(1). CF(0) has three main subunits: a, b and c. In this bacterium the a and b subunits are transcribed but do not seem to be translated, thus the ATP synthase consists of the alpha, beta, gamma, delta, epsilon and c subunits.

The protein localises to the cell membrane. Its function is as follows. Produces ATP from ADP in the presence of a proton gradient across the membrane. The gamma chain is believed to be important in regulating ATPase activity and the flow of protons through the CF(0) complex. This Moorella thermoacetica (strain ATCC 39073 / JCM 9320) protein is ATP synthase gamma chain.